The sequence spans 528 residues: Peptide chain release factor 3 (528 aa).

The 271-residue stretch at 10–280 (AKRRTFGIIS…IDMAPAPGPR (271 aa)) folds into the tr-type G domain. GTP-binding positions include 19–26 (SHPDAGKT), 87–91 (DTPGH), and 141–144 (NKLD).

It belongs to the TRAFAC class translation factor GTPase superfamily. Classic translation factor GTPase family. PrfC subfamily.

The protein resides in the cytoplasm. In terms of biological role, increases the formation of ribosomal termination complexes and stimulates activities of RF-1 and RF-2. It binds guanine nucleotides and has strong preference for UGA stop codons. It may interact directly with the ribosome. The stimulation of RF-1 and RF-2 is significantly reduced by GTP and GDP, but not by GMP. This is Peptide chain release factor 3 from Desulfotalea psychrophila (strain LSv54 / DSM 12343).